Here is a 407-residue protein sequence, read N- to C-terminus: Methylthioribose kinase (407 aa).

Residues Asn40, Lys57, and 111 to 113 (EDL) each bind ATP. A substrate-binding site is contributed by Asp229. 246-248 (DAE) serves as a coordination point for ATP. Arg344 contributes to the substrate binding site.

This sequence belongs to the methylthioribose kinase family. Homodimer.

The enzyme catalyses 5-(methylsulfanyl)-D-ribose + ATP = 5-(methylsulfanyl)-alpha-D-ribose 1-phosphate + ADP + H(+). Its pathway is amino-acid biosynthesis; L-methionine biosynthesis via salvage pathway; S-methyl-5-thio-alpha-D-ribose 1-phosphate from S-methyl-5'-thioadenosine (hydrolase route): step 2/2. Functionally, catalyzes the phosphorylation of methylthioribose into methylthioribose-1-phosphate. The polypeptide is Methylthioribose kinase (Yersinia pseudotuberculosis serotype IB (strain PB1/+)).